The following is a 446-amino-acid chain: Tubulin alpha-1B chain (446 aa).

Q11 is a binding site for GTP. The disordered stretch occupies residues 34–55 (GRLMDDSPSKHDSGSTFFSETG). The span at 35–46 (RLMDDSPSKHDS) shows a compositional bias: basic and acidic residues. 7 residues coordinate GTP: E69, S138, G142, T143, S177, N204, and N226. Residue E69 participates in Mg(2+) binding. E252 is an active-site residue.

This sequence belongs to the tubulin family. In terms of assembly, dimer of alpha and beta chains. A typical microtubule is a hollow water-filled tube with an outer diameter of 25 nm and an inner diameter of 15 nM. Alpha-beta heterodimers associate head-to-tail to form protofilaments running lengthwise along the microtubule wall with the beta-tubulin subunit facing the microtubule plus end conferring a structural polarity. Microtubules usually have 13 protofilaments but different protofilament numbers can be found in some organisms and specialized cells. Requires Mg(2+) as cofactor.

It is found in the cytoplasm. The protein localises to the cytoskeleton. It carries out the reaction GTP + H2O = GDP + phosphate + H(+). Functionally, tubulin is the major constituent of microtubules, a cylinder consisting of laterally associated linear protofilaments composed of alpha- and beta-tubulin heterodimers. Microtubules grow by the addition of GTP-tubulin dimers to the microtubule end, where a stabilizing cap forms. Below the cap, tubulin dimers are in GDP-bound state, owing to GTPase activity of alpha-tubulin. This Schizophyllum commune (Split gill fungus) protein is Tubulin alpha-1B chain (TUB-1B).